A 219-amino-acid chain; its full sequence is Cytidylate kinase (219 aa).

15-23 (GPAASGKGT) is a binding site for ATP.

Belongs to the cytidylate kinase family. Type 1 subfamily.

It is found in the cytoplasm. The enzyme catalyses CMP + ATP = CDP + ADP. It catalyses the reaction dCMP + ATP = dCDP + ADP. The sequence is that of Cytidylate kinase from Brucella melitensis biotype 2 (strain ATCC 23457).